Here is a 738-residue protein sequence, read N- to C-terminus: Translation initiation factor IF-2 (738 aa).

Over residues 1-10 (MNSMRISGHQ) the composition is skewed to polar residues. The tract at residues 1 to 150 (MNSMRISGHQ…PTTVRAPVRP (150 aa)) is disordered. Residues 22–102 (AGGGRGPGNP…GGRGPSGGRG (81 aa)) show a composition bias toward gly residues. Positions 103–120 (GDGRRREESPTDHEDGRI) are enriched in basic and acidic residues. Positions 121–143 (NRSGRSTSTTTTRTSSTLARPTT) are enriched in low complexity. Positions 238 to 405 (PRPPVVTIMG…MILLVADLNE (168 aa)) constitute a tr-type G domain. The interval 247–254 (GHVDHGKT) is G1. GTP is bound at residue 247-254 (GHVDHGKT). The interval 272-276 (GITQH) is G2. A G3 region spans residues 293–296 (DTPG). GTP is bound by residues 293-297 (DTPGH) and 347-350 (NKID). The tract at residues 347-350 (NKID) is G4. Positions 383–385 (SAK) are G5.

It belongs to the TRAFAC class translation factor GTPase superfamily. Classic translation factor GTPase family. IF-2 subfamily.

The protein localises to the cytoplasm. One of the essential components for the initiation of protein synthesis. Protects formylmethionyl-tRNA from spontaneous hydrolysis and promotes its binding to the 30S ribosomal subunits. Also involved in the hydrolysis of GTP during the formation of the 70S ribosomal complex. The chain is Translation initiation factor IF-2 from Roseiflexus castenholzii (strain DSM 13941 / HLO8).